Reading from the N-terminus, the 1346-residue chain is Cytokinesis protein sepH (1346 aa).

The segment at 1–50 (MVSRSNEGPEAPHPASRTPGAPAKGRLTRLGSSPSKRDDKAKDDRMGKTS) is disordered. The segment covering 35 to 50 (SKRDDKAKDDRMGKTS) has biased composition (basic and acidic residues). Residues 60-310 (YQLGDCLGRG…ARKLLKHPWI (251 aa)) form the Protein kinase domain. ATP is bound by residues 66–74 (LGRGAFGSV) and K89. Residue D182 is the Proton acceptor of the active site. Disordered stretches follow at residues 342-380 (RSPESNALRRGTRNENQNPPSLRLDTRHTPTKVTLPSPV), 446-497 (DESF…HMRR), and 1211-1295 (LCKL…AGAS). 2 stretches are compositionally biased toward polar residues: residues 477 to 489 (QQANSGTSQSQNG) and 1220 to 1249 (RGSTSATSPGLLANQSAPVTPQLSRQNQSK).

This sequence belongs to the protein kinase superfamily. Ser/Thr protein kinase family. CDC7 subfamily. Requires Mg(2+) as cofactor.

The catalysed reaction is L-seryl-[protein] + ATP = O-phospho-L-seryl-[protein] + ADP + H(+). It carries out the reaction L-threonyl-[protein] + ATP = O-phospho-L-threonyl-[protein] + ADP + H(+). Functionally, required for early events during cytokinesis including localization of cytoskeletal components to the cytokinetic ring. The chain is Cytokinesis protein sepH from Emericella nidulans (strain FGSC A4 / ATCC 38163 / CBS 112.46 / NRRL 194 / M139) (Aspergillus nidulans).